The primary structure comprises 485 residues: NADH-quinone oxidoreductase subunit N (485 aa).

14 helical membrane-spanning segments follow: residues 8-28 (LIAL…MLGI), 35-55 (FINA…LYFV), 78-98 (GLVI…LVGY), 104-124 (EFYL…SANH), 125-145 (LASL…LVGY), 159-179 (YMLL…LLYA), 203-223 (VLAG…LVPF), 235-255 (PAPV…AVVM), 271-291 (MVLS…AISQ), 297-317 (LLGY…IAVQ), 327-347 (GVYL…VSLM), 374-394 (AVMT…GFIG), 408-427 (WWLT…YYLR), and 449-469 (ALTA…LLGV).

It belongs to the complex I subunit 2 family. In terms of assembly, NDH-1 is composed of 13 different subunits. Subunits NuoA, H, J, K, L, M, N constitute the membrane sector of the complex.

Its subcellular location is the cell inner membrane. It catalyses the reaction a quinone + NADH + 5 H(+)(in) = a quinol + NAD(+) + 4 H(+)(out). Functionally, NDH-1 shuttles electrons from NADH, via FMN and iron-sulfur (Fe-S) centers, to quinones in the respiratory chain. The immediate electron acceptor for the enzyme in this species is believed to be ubiquinone. Couples the redox reaction to proton translocation (for every two electrons transferred, four hydrogen ions are translocated across the cytoplasmic membrane), and thus conserves the redox energy in a proton gradient. The polypeptide is NADH-quinone oxidoreductase subunit N (Serratia proteamaculans (strain 568)).